Here is a 181-residue protein sequence, read N- to C-terminus: High mobility group protein B4 (181 aa).

The HMG box 1 DNA-binding region spans 9-79 (PKVNVSSYIH…RYQQEMMNYI (71 aa)). Residues 80-89 (GKRRKRRKRD) are compositionally biased toward basic residues. The tract at residues 80–100 (GKRRKRRKRDPKAPRKPPSSF) is disordered. The HMG box 2 DNA-binding region spans 93-161 (PRKPPSSFLL…KYFEEQEAYR (69 aa)).

It belongs to the HMGB family. In terms of tissue distribution, expressed in adult germ cells (at protein level).

The protein resides in the nucleus. The protein localises to the chromosome. This is High mobility group protein B4 (Hmgb4) from Mus musculus (Mouse).